The primary structure comprises 97 residues: UPF0235 protein cbdbA1230 (97 aa).

It belongs to the UPF0235 family.

This is UPF0235 protein cbdbA1230 from Dehalococcoides mccartyi (strain CBDB1).